Consider the following 156-residue polypeptide: Small ribosomal subunit protein uS7c (156 aa).

It belongs to the universal ribosomal protein uS7 family. In terms of assembly, part of the 30S ribosomal subunit.

Its subcellular location is the plastid. It localises to the chloroplast. Functionally, one of the primary rRNA binding proteins, it binds directly to 16S rRNA where it nucleates assembly of the head domain of the 30S subunit. This is Small ribosomal subunit protein uS7c (rps7) from Pyropia yezoensis (Susabi-nori).